An 89-amino-acid polypeptide reads, in one-letter code: Probable Fe(2+)-trafficking protein (89 aa).

This sequence belongs to the Fe(2+)-trafficking protein family.

Its function is as follows. Could be a mediator in iron transactions between iron acquisition and iron-requiring processes, such as synthesis and/or repair of Fe-S clusters in biosynthetic enzymes. This chain is Probable Fe(2+)-trafficking protein, found in Hahella chejuensis (strain KCTC 2396).